Consider the following 397-residue polypeptide: Argininosuccinate synthase (397 aa).

Residue 8-16 (AYSGGLDTS) participates in ATP binding. L-citrulline contacts are provided by Tyr86 and Ser91. Gly116 serves as a coordination point for ATP. Residues Thr118, Asn122, and Asp123 each contribute to the L-aspartate site. Asn122 contacts L-citrulline. Residues Arg126, Ser175, Ser184, Glu260, and Tyr272 each coordinate L-citrulline.

This sequence belongs to the argininosuccinate synthase family. Type 1 subfamily. As to quaternary structure, homotetramer.

Its subcellular location is the cytoplasm. The enzyme catalyses L-citrulline + L-aspartate + ATP = 2-(N(omega)-L-arginino)succinate + AMP + diphosphate + H(+). It participates in amino-acid biosynthesis; L-arginine biosynthesis; L-arginine from L-ornithine and carbamoyl phosphate: step 2/3. This chain is Argininosuccinate synthase, found in Clostridium botulinum (strain Kyoto / Type A2).